Here is a 206-residue protein sequence, read N- to C-terminus: Guanylate kinase (206 aa).

The 179-residue stretch at 6–184 folds into the Guanylate kinase-like domain; sequence GNLFILSAPS…ALTDIETIVM (179 aa). Position 13 to 20 (13 to 20) interacts with ATP; sequence APSGAGKS.

Belongs to the guanylate kinase family.

The protein resides in the cytoplasm. The enzyme catalyses GMP + ATP = GDP + ADP. In terms of biological role, essential for recycling GMP and indirectly, cGMP. The chain is Guanylate kinase from Pseudoalteromonas translucida (strain TAC 125).